Consider the following 387-residue polypeptide: UDP-N-acetylglucosamine--N-acetylmuramyl-(pentapeptide) pyrophosphoryl-undecaprenol N-acetylglucosamine transferase (387 aa).

UDP-N-acetyl-alpha-D-glucosamine contacts are provided by residues 26-28 (TGG), Asn137, Arg177, Ser205, and Gln306.

Belongs to the glycosyltransferase 28 family. MurG subfamily.

The protein resides in the cell inner membrane. It catalyses the reaction di-trans,octa-cis-undecaprenyl diphospho-N-acetyl-alpha-D-muramoyl-L-alanyl-D-glutamyl-meso-2,6-diaminopimeloyl-D-alanyl-D-alanine + UDP-N-acetyl-alpha-D-glucosamine = di-trans,octa-cis-undecaprenyl diphospho-[N-acetyl-alpha-D-glucosaminyl-(1-&gt;4)]-N-acetyl-alpha-D-muramoyl-L-alanyl-D-glutamyl-meso-2,6-diaminopimeloyl-D-alanyl-D-alanine + UDP + H(+). It functions in the pathway cell wall biogenesis; peptidoglycan biosynthesis. Its function is as follows. Cell wall formation. Catalyzes the transfer of a GlcNAc subunit on undecaprenyl-pyrophosphoryl-MurNAc-pentapeptide (lipid intermediate I) to form undecaprenyl-pyrophosphoryl-MurNAc-(pentapeptide)GlcNAc (lipid intermediate II). The polypeptide is UDP-N-acetylglucosamine--N-acetylmuramyl-(pentapeptide) pyrophosphoryl-undecaprenol N-acetylglucosamine transferase (Rhodospirillum rubrum (strain ATCC 11170 / ATH 1.1.1 / DSM 467 / LMG 4362 / NCIMB 8255 / S1)).